A 161-amino-acid polypeptide reads, in one-letter code: Vitamin K-dependent protein C (161 aa).

The Peptidase S1 domain occupies 1-161; that stretch reads EKWELDLDIE…GCGLLHNYGV (161 aa). Asn-17 carries N-linked (GlcNAc...) asparagine glycosylation. Catalysis depends on Asp-26, which acts as the Charge relay system. Asn-82 is a glycosylation site (N-linked (GlcNAc...) asparagine). Disulfide bonds link Cys-100-Cys-114 and Cys-125-Cys-153. Catalysis depends on Ser-129, which acts as the Charge relay system.

Belongs to the peptidase S1 family. As to expression, plasma; synthesized in the liver.

Its subcellular location is the secreted. It localises to the golgi apparatus. It is found in the endoplasmic reticulum. It catalyses the reaction Degradation of blood coagulation factors Va and VIIIa.. In terms of biological role, protein C is a vitamin K-dependent serine protease that regulates blood coagulation by inactivating factors Va and VIIIa in the presence of calcium ions and phospholipids. Exerts a protective effect on the endothelial cell barrier function. The protein is Vitamin K-dependent protein C (PROC) of Macaca mulatta (Rhesus macaque).